Reading from the N-terminus, the 234-residue chain is MSGLHILAFGAHADDVEIGMAGTIAKYTKQGYEVGICDLTEADLSSNGTIELRKEEAKAAARIMGVKTRLNLAMPDRGLYMKEEYIREIVKVIRTYKPKLVFAPYYEDRHPDHANCAKLVEEAIFSAGIRKYMPEVPPHRVESFYHYMINGFHKPNFCIDISEYVSQKVEALEAYESQFSTGSDGVKTPLTEGYVETVVAREKMFGKEVGVLYAEGFMSKKPVLLHADLIGGCK.

Zn(2+) is bound by residues His12, Asp15, and His113.

This sequence belongs to the PIGL family. Zn(2+) is required as a cofactor.

The enzyme catalyses (S)-malyl N-acetyl-alpha-D-glucosaminide + H2O = (S)-malyl alpha-D-glucosaminide + acetate. With respect to regulation, inhibited by BSH. Functionally, involved in bacillithiol (BSH) biosynthesis. Catalyzes the second step of the pathway, the deacetylation of N-acetylglucosaminylmalate (GlcNAc-Mal) to glucosamine malate (GlcN-Mal). This is N-acetyl-alpha-D-glucosaminyl L-malate deacetylase 1 from Bacillus anthracis.